The following is a 536-amino-acid chain: CTP synthase (536 aa).

The tract at residues 1-267 is amidoligase domain; the sequence is MTKFIFVTGG…DDIVIKRLQL (267 aa). Serine 13 is a CTP binding site. Serine 13 contacts UTP. 14–19 provides a ligand contact to ATP; the sequence is SLGKGI. Tyrosine 54 is a binding site for L-glutamine. Aspartate 71 provides a ligand contact to ATP. Residues aspartate 71 and glutamate 141 each contribute to the Mg(2+) site. Residues 148–150, 188–193, and lysine 224 each bind CTP; these read DIE and KTKPTQ. UTP contacts are provided by residues 188 to 193 and lysine 224; that span reads KTKPTQ. Residue 240-242 coordinates ATP; the sequence is RDA. A Glutamine amidotransferase type-1 domain is found at 293–535; that stretch reads TIGLVGKYVS…IEASLKYQQN (243 aa). Glycine 355 is an L-glutamine binding site. Catalysis depends on cysteine 382, which acts as the Nucleophile; for glutamine hydrolysis. L-glutamine contacts are provided by residues 383–386, glutamate 406, and arginine 463; that span reads LGMQ. Active-site residues include histidine 508 and glutamate 510.

Belongs to the CTP synthase family. As to quaternary structure, homotetramer.

It carries out the reaction UTP + L-glutamine + ATP + H2O = CTP + L-glutamate + ADP + phosphate + 2 H(+). It catalyses the reaction L-glutamine + H2O = L-glutamate + NH4(+). The catalysed reaction is UTP + NH4(+) + ATP = CTP + ADP + phosphate + 2 H(+). It participates in pyrimidine metabolism; CTP biosynthesis via de novo pathway; CTP from UDP: step 2/2. Allosterically activated by GTP, when glutamine is the substrate; GTP has no effect on the reaction when ammonia is the substrate. The allosteric effector GTP functions by stabilizing the protein conformation that binds the tetrahedral intermediate(s) formed during glutamine hydrolysis. Inhibited by the product CTP, via allosteric rather than competitive inhibition. Functionally, catalyzes the ATP-dependent amination of UTP to CTP with either L-glutamine or ammonia as the source of nitrogen. Regulates intracellular CTP levels through interactions with the four ribonucleotide triphosphates. The sequence is that of CTP synthase from Staphylococcus aureus (strain NCTC 8325 / PS 47).